A 327-amino-acid chain; its full sequence is Leucotoxin LukDv (327 aa).

The first 26 residues, 1–26, serve as a signal peptide directing secretion; the sequence is MKMKKLVKSSVASSIALLLLSNTVDA.

The protein belongs to the aerolysin family. In terms of assembly, toxicity requires sequential binding and synergistic association of a class S and a class F component which form heterooligomeric complexes. LukEv (class S) associates with LukDv (class F).

The protein resides in the secreted. In terms of biological role, part of a bi-component leucotoxin that acts by forming pores in the membrane of the target cells. The activity of LukEv-LukDv to rabbit leukocytes is similar to that of the Panton-Valentine leucocidin (PVL). LukEv-LukDv is hemolytic to rabbit red blood cells although the activity is only 8% of gamma-hemolysin. This is Leucotoxin LukDv (lukDv) from Staphylococcus aureus (strain NCTC 8325 / PS 47).